Here is a 919-residue protein sequence, read N- to C-terminus: TRPM8 channel-associated factor 2 (919 aa).

One can recognise a Peptidase M60 domain in the interval 542-841; sequence DCWVSTGLYL…TYLQLQEAFG (300 aa).

The protein belongs to the TCAF family. Isoform 2 interacts with TRPM8 (via N-terminus and C-terminus domains); the interaction inhibits TRPM8 channel activity. Interacts with TRPV6. In terms of tissue distribution, isoform 2 is expressed in the prostate and in cancerous prostate samples.

Its subcellular location is the cell membrane. In terms of biological role, negatively regulates the plasma membrane cation channel TRPM8 activity. Involved in the recruitment of TRPM8 to the cell surface. Promotes prostate cancer cell migration stimulation in a TRPM8-dependent manner. The protein is TRPM8 channel-associated factor 2 of Homo sapiens (Human).